The sequence spans 312 residues: Apolipoprotein E (312 aa).

Residues 1 to 18 form the signal peptide; the sequence is MKALWAVLLATLLTGCLA. Tandem repeats lie at residues 72 to 93, 94 to 115, 116 to 137, 138 to 159, 160 to 181, 182 to 203, 204 to 225, and 226 to 247. The tract at residues 72–247 is 8 X 22 AA approximate tandem repeats; it reads VLMEDTMTEV…RLEEMREHME (176 aa). Methionine sulfoxide is present on Met-135. Positions 150-160 are LDL and other lipoprotein receptors binding; the sequence is HLRKMRKRLMR. Positions 150–160 are LDL receptor binding; it reads HLRKMRKRLMR. 154-157 is a binding site for heparin; it reads MRKR. A lipid-binding and lipoprotein association region spans residues 202–282; it reads TANLGAGAAQ…SWFEPLVEDM (81 aa). Residue 221–228 participates in heparin binding; the sequence is SERLRGRL. Residues 258–312 are homooligomerization; sequence QQIRLQAEIFQARLKSWFEPLVEDMHRQLANLVEKIQSSVATNSVLSTSVPQENQ. The interval 270–282 is specificity for association with VLDL; the sequence is RLKSWFEPLVEDM.

It belongs to the apolipoprotein A1/A4/E family. As to quaternary structure, homotetramer. May interact with ABCA1; functionally associated with ABCA1 in the biogenesis of HDLs. May interact with APP/A4 amyloid-beta peptide; the interaction is extremely stable in vitro but its physiological significance is unclear. May interact with MAPT. May interact with MAP2. In the cerebrospinal fluid, interacts with secreted SORL1. Interacts with PMEL; this allows the loading of PMEL luminal fragment on ILVs to induce fibril nucleation. Post-translationally, APOE exists as multiple glycosylated and sialylated glycoforms within cells and in plasma. The extent of glycosylation and sialylation are tissue and context specific. In terms of processing, glycated in plasma VLDL. Phosphorylated by FAM20C in the extracellular medium.

The protein resides in the secreted. It localises to the extracellular space. Its subcellular location is the extracellular matrix. The protein localises to the extracellular vesicle. It is found in the endosome. The protein resides in the multivesicular body. Functionally, APOE is an apolipoprotein, a protein associating with lipid particles, that mainly functions in lipoprotein-mediated lipid transport between organs via the plasma and interstitial fluids. APOE is a core component of plasma lipoproteins and is involved in their production, conversion and clearance. Apolipoproteins are amphipathic molecules that interact both with lipids of the lipoprotein particle core and the aqueous environment of the plasma. As such, APOE associates with chylomicrons, chylomicron remnants, very low density lipoproteins (VLDL) and intermediate density lipoproteins (IDL) but shows a preferential binding to high-density lipoproteins (HDL). It also binds a wide range of cellular receptors including the LDL receptor/LDLR, the LDL receptor-related proteins LRP1, LRP2 and LRP8 and the very low-density lipoprotein receptor/VLDLR that mediate the cellular uptake of the APOE-containing lipoprotein particles. Finally, APOE also has a heparin-binding activity and binds heparan-sulfate proteoglycans on the surface of cells, a property that supports the capture and the receptor-mediated uptake of APOE-containing lipoproteins by cells. A main function of APOE is to mediate lipoprotein clearance through the uptake of chylomicrons, VLDLs, and HDLs by hepatocytes. APOE is also involved in the biosynthesis by the liver of VLDLs as well as their uptake by peripheral tissues ensuring the delivery of triglycerides and energy storage in muscle, heart and adipose tissues. By participating in the lipoprotein-mediated distribution of lipids among tissues, APOE plays a critical role in plasma and tissues lipid homeostasis. APOE is also involved in two steps of reverse cholesterol transport, the HDLs-mediated transport of cholesterol from peripheral tissues to the liver, and thereby plays an important role in cholesterol homeostasis. First, it is functionally associated with ABCA1 in the biogenesis of HDLs in tissues. Second, it is enriched in circulating HDLs and mediates their uptake by hepatocytes. APOE also plays an important role in lipid transport in the central nervous system, regulating neuron survival and sprouting. The chain is Apolipoprotein E (Apoe) from Arvicanthis niloticus (African grass rat).